The sequence spans 1343 residues: Vascular endothelial growth factor receptor 2 (1343 aa).

Positions 1–19 (MESRALLAVALWFCVETRA) are cleaved as a signal peptide. The Extracellular portion of the chain corresponds to 20 to 760 (ASVGLPGDSL…EGVQEKTNLE (741 aa)). N46, N96, N143, N158, and N245 each carry an N-linked (GlcNAc...) asparagine glycan. Ig-like C2-type domains are found at residues 46-109 (NTTL…RDTD), 141-207 (NKNK…INDE), 224-320 (YDVV…KNKT), 328-414 (PFIA…HMVS), 421-540 (PQIG…RVIS), 547-654 (PEIT…LVKQ), and 663-749 (PMIT…TLFI). C53 and C103 are oxidised to a cystine. The cysteines at positions 150 and 200 are disulfide-linked. An intrachain disulfide couples C246 to C307. N318, N374, N395, N507, N576, N609, N615, N627, N671, N700, and N717 each carry an N-linked (GlcNAc...) asparagine glycan. 2 disulfides stabilise this stretch: C445/C526 and C567/C638. C684 and C733 form a disulfide bridge. A helical membrane pass occupies residues 761–781 (VIILVGTAVIAMFFWLLLVIL). Residues 782 to 1343 (VRTVKRANEG…SGTTLRSSPV (562 aa)) lie on the Cytoplasmic side of the membrane. Y797 carries the phosphotyrosine modification. The 329-residue stretch at 830–1158 (LKLGKPLGRG…FSELVEHLGN (329 aa)) folds into the Protein kinase domain. Residues 836 to 844 (LGRGAFGQV) and K864 each bind ATP. Y947 carries the post-translational modification Phosphotyrosine; by autocatalysis. A phosphoserine mark is found at S978 and S980. The residue at position 992 (Y992) is a Phosphotyrosine; by autocatalysis. A disulfide bridge links C1020 with C1041. The active-site Proton acceptor is the D1024. Phosphotyrosine; by autocatalysis is present on residues Y1050, Y1055, Y1171, and Y1210. Residues S1227 and S1231 each carry the phosphoserine modification. The residue at position 1234 (T1234) is a Phosphothreonine. Positions 1267 to 1314 (TLEDRNKLSPSFGGMMPSKSRESVASEGSNQTSGYQSGYHSDDTDTTV) are disordered. Residues 1292–1305 (SEGSNQTSGYQSGY) show a composition bias toward polar residues. Y1301, Y1305, and Y1315 each carry phosphotyrosine; by autocatalysis.

It belongs to the protein kinase superfamily. Tyr protein kinase family. CSF-1/PDGF receptor subfamily. Homodimer in the presence of bound dimeric VEGFA, VEGFC or VEGFD ligands; monomeric in the absence of bound ligands. Can also form heterodimers with FLT1/VEGFR1 and KDR/VEGFR2. Interacts (tyrosine phosphorylated) with LFYN, NCK1, PLCG1. Interacts (tyrosine-phosphorylated active form preferentially) with DAB2IP (via C2 domain and active form preferentially); the interaction occurs at the late phase of VEGFA response and inhibits KDR/VEGFR2 activity. Interacts with SHBSH2D2A/TSAD, GRB2, MYOF, CBL and PDCD6. Interacts (via C-terminus domain) with ERN1 (via kinase domain); the interaction is facilitated in a XBP1- and vascular endothelial growth factor (VEGF)-dependent manner in endothelial cells. Interacts (via juxtamembrane region) with chaperone PDCL3 (via thioredoxin fold region); the interaction leads to increased KDR/VEGFR2 abundance through inhibition of its ubiquitination and degradation. Interacts (tyrosine phosphorylated) with CCDC88A/GIV (via SH2-like region); binding requires autophosphorylation of the KDR/VEGFR2 C-terminal region. Interacts with isoform 2 of BSG. Interacts with SLC31A1; this interaction is induced upon VEGFA stimulation leading to SLC31A1 and KDR subsequent co-internalization to early endosomes, thereby activating KDR downstream signaling in endothelial cells. In terms of processing, N-glycosylated. Post-translationally, ubiquitinated. Tyrosine phosphorylation of the receptor promotes its poly-ubiquitination, leading to its degradation via the proteasome or lysosomal proteases. Autophosphorylated on tyrosine residues upon ligand binding. Autophosphorylation occurs in trans, i.e. one subunit of the dimeric receptor phosphorylates tyrosine residues on the other subunit. Phosphorylation at Tyr-947 is important for interaction with SH2D2A/TSAD and VEGFA-mediated reorganization of the actin cytoskeleton. Phosphorylation at Tyr-1171 is important for interaction with PLCG1 and SHB. Phosphorylation at Tyr-1210 is important for interaction with NCK1 and FYN. Dephosphorylated by PTPRB. Dephosphorylated by PTPRJ at Tyr-797, Tyr-947, Tyr-992, Tyr-1050, Tyr-1055, Tyr-1171 and Tyr-1210. In terms of processing, the inhibitory disulfide bond between Cys-1020 and Cys-1041 may serve as a specific molecular switch for H(2)S-induced modification that regulates KDR/VEGFR2 function. Expressed in the post-pubertal mammary glands.

It localises to the cell membrane. The protein localises to the cytoplasm. The protein resides in the nucleus. It is found in the cytoplasmic vesicle. Its subcellular location is the early endosome. It localises to the cell junction. The protein localises to the endoplasmic reticulum. The catalysed reaction is L-tyrosyl-[protein] + ATP = O-phospho-L-tyrosyl-[protein] + ADP + H(+). Its activity is regulated as follows. Present in an inactive conformation in the absence of bound ligand. Binding of VEGFA, VEGFC or VEGFD leads to dimerization and activation by autophosphorylation on tyrosine residues. May be regulated by hydrogen sulfide (H(2)S) levels via a sensitive intracellular disulfide bond. Functionally, tyrosine-protein kinase that acts as a cell-surface receptor for VEGFA, VEGFC and VEGFD. Plays an essential role in the regulation of angiogenesis, vascular development, vascular permeability, and embryonic hematopoiesis. Promotes proliferation, survival, migration and differentiation of endothelial cells. Promotes reorganization of the actin cytoskeleton. Isoforms lacking a transmembrane domain may function as decoy receptors for VEGFA, VEGFC and/or VEGFD. Modulates FLT1 and FLT4 signaling by forming heterodimers. Binding of vascular growth factors to isoform 1 leads to the activation of several signaling cascades. Activation of PLCG1 leads to the production of the cellular signaling molecules diacylglycerol and inositol-1,4,5-trisphosphate and the activation of protein kinase C. Mediates activation of MAPK1/ERK2, MAPK3/ERK1 and the MAP kinase signaling pathway, as well as of the AKT1 signaling pathway. Mediates phosphorylation of PIK3R1, the regulatory subunit of phosphatidylinositol 3-kinase, reorganization of the actin cytoskeleton and activation of PTK2/FAK1. Required for VEGFA-mediated induction of NOS2 and NOS3, leading to the production of the signaling molecule nitric oxide (NO) by endothelial cells. Phosphorylates PLCG1. Promotes phosphorylation of FYN, NCK1, NOS3, PIK3R1, PTK2/FAK1 and SRC. This is Vascular endothelial growth factor receptor 2 from Rattus norvegicus (Rat).